A 357-amino-acid polypeptide reads, in one-letter code: 3-isopropylmalate dehydrogenase (357 aa).

76 to 89 provides a ligand contact to NAD(+); that stretch reads GPQWDTIDPALRPE. Substrate contacts are provided by Arg96, Arg106, Arg134, and Asp224. Mg(2+)-binding residues include Asp224, Asp248, and Asp252. Residue 282-294 participates in NAD(+) binding; that stretch reads GSAPDIAGQGVAN.

It belongs to the isocitrate and isopropylmalate dehydrogenases family. LeuB type 1 subfamily. Homodimer. Mg(2+) is required as a cofactor. Mn(2+) serves as cofactor.

The protein resides in the cytoplasm. It carries out the reaction (2R,3S)-3-isopropylmalate + NAD(+) = 4-methyl-2-oxopentanoate + CO2 + NADH. It functions in the pathway amino-acid biosynthesis; L-leucine biosynthesis; L-leucine from 3-methyl-2-oxobutanoate: step 3/4. Catalyzes the oxidation of 3-carboxy-2-hydroxy-4-methylpentanoate (3-isopropylmalate) to 3-carboxy-4-methyl-2-oxopentanoate. The product decarboxylates to 4-methyl-2 oxopentanoate. This chain is 3-isopropylmalate dehydrogenase, found in Xylella fastidiosa (strain 9a5c).